We begin with the raw amino-acid sequence, 125 residues long: CLAVATA3/ESR (CLE)-related protein ESR3 (125 aa).

An N-terminal signal peptide occupies residues 1 to 26 (MASRMGMVAIMSLFVYAIVVPTSVNA). The segment at 45 to 125 (QQQGGFIGHR…IGPPPLPDRY (81 aa)) is disordered. A hydroxyproline mark is found at P75 and P78. P78 is a glycosylation site (O-linked (Ara...) hydroxyproline).

This sequence belongs to the CLV3/ESR signal peptide family. In terms of processing, the O-glycosylation (arabinosylation) of the hydroxyproline Pro-78 enhances binding affinity of the ESR3p peptide for its receptor. As to expression, seed endosperm.

The protein resides in the secreted. The protein localises to the extracellular space. Extracellular signal peptide that regulates cell fate. The chain is CLAVATA3/ESR (CLE)-related protein ESR3 from Zea mays (Maize).